Here is a 98-residue protein sequence, read N- to C-terminus: NADH-ubiquinone oxidoreductase chain 4L (98 aa).

Transmembrane regions (helical) follow at residues 1–21 (MNLI…GLIF), 26–46 (IINI…LFVL), and 61–81 (LYIL…VVIL).

Belongs to the complex I subunit 4L family.

The protein resides in the mitochondrion membrane. The catalysed reaction is a ubiquinone + NADH + 5 H(+)(in) = a ubiquinol + NAD(+) + 4 H(+)(out). In terms of biological role, core subunit of the mitochondrial membrane respiratory chain NADH dehydrogenase (Complex I) that is believed to belong to the minimal assembly required for catalysis. Complex I functions in the transfer of electrons from NADH to the respiratory chain. The immediate electron acceptor for the enzyme is believed to be ubiquinone. The polypeptide is NADH-ubiquinone oxidoreductase chain 4L (nad4L) (Dictyostelium citrinum (Slime mold)).